Here is a 215-residue protein sequence, read N- to C-terminus: Pyrrolidone-carboxylate peptidase (215 aa).

Residues E80, C143, and H167 contribute to the active site.

This sequence belongs to the peptidase C15 family. As to quaternary structure, homotetramer.

The protein resides in the cytoplasm. It catalyses the reaction Release of an N-terminal pyroglutamyl group from a polypeptide, the second amino acid generally not being Pro.. Removes 5-oxoproline from various penultimate amino acid residues except L-proline. This Bacillus mycoides (strain KBAB4) (Bacillus weihenstephanensis) protein is Pyrrolidone-carboxylate peptidase.